We begin with the raw amino-acid sequence, 466 residues long: Ribulose bisphosphate carboxylase large chain (466 aa).

At K5 the chain carries N6,N6,N6-trimethyllysine. Residues N114 and T164 each contribute to the substrate site. Catalysis depends on K166, which acts as the Proton acceptor. Residue K168 coordinates substrate. Mg(2+)-binding residues include K192, D194, and E195. An N6-carboxylysine modification is found at K192. H285 functions as the Proton acceptor in the catalytic mechanism. R286, H318, and S370 together coordinate substrate.

This sequence belongs to the RuBisCO large chain family. Type I subfamily. Heterohexadecamer of 8 large chains and 8 small chains; disulfide-linked. The disulfide link is formed within the large subunit homodimers. Mg(2+) serves as cofactor. Post-translationally, the disulfide bond which can form in the large chain dimeric partners within the hexadecamer appears to be associated with oxidative stress and protein turnover.

Its subcellular location is the plastid. It is found in the chloroplast. It carries out the reaction 2 (2R)-3-phosphoglycerate + 2 H(+) = D-ribulose 1,5-bisphosphate + CO2 + H2O. The catalysed reaction is D-ribulose 1,5-bisphosphate + O2 = 2-phosphoglycolate + (2R)-3-phosphoglycerate + 2 H(+). In terms of biological role, ruBisCO catalyzes two reactions: the carboxylation of D-ribulose 1,5-bisphosphate, the primary event in carbon dioxide fixation, as well as the oxidative fragmentation of the pentose substrate in the photorespiration process. Both reactions occur simultaneously and in competition at the same active site. The polypeptide is Ribulose bisphosphate carboxylase large chain (Gonopterodendron arboreum (Maracaibo lignum-vitae)).